The chain runs to 153 residues: Protein DpnD (153 aa).

The sequence is that of Protein DpnD from Streptococcus pneumoniae serotype 4 (strain ATCC BAA-334 / TIGR4).